The following is a 414-amino-acid chain: Probable aminotransferase TAT2 (414 aa).

It belongs to the class-I pyridoxal-phosphate-dependent aminotransferase family. It depends on pyridoxal 5'-phosphate as a cofactor.

In Arabidopsis thaliana (Mouse-ear cress), this protein is Probable aminotransferase TAT2.